The chain runs to 178 residues: Small ribosomal subunit protein uS4 (178 aa).

One can recognise an S4 RNA-binding domain in the interval 104 to 166; it reads RRLQTIVFRK…SNSPMASENH (63 aa). Positions 158 to 178 are disordered; the sequence is NSPMASENHPERTAATSEENQ.

This sequence belongs to the universal ribosomal protein uS4 family. As to quaternary structure, part of the 30S ribosomal subunit. Contacts protein S5. The interaction surface between S4 and S5 is involved in control of translational fidelity.

Its function is as follows. One of the primary rRNA binding proteins, it binds directly to 16S rRNA where it nucleates assembly of the body of the 30S subunit. With S5 and S12 plays an important role in translational accuracy. In Methanococcus maripaludis (strain DSM 14266 / JCM 13030 / NBRC 101832 / S2 / LL), this protein is Small ribosomal subunit protein uS4.